Reading from the N-terminus, the 524-residue chain is Alkaline phosphatase, tissue-nonspecific isozyme (524 aa).

A signal peptide spans 1–17; the sequence is MILPFLVLAIGTCLTNS. Asp-60 lines the Mg(2+) pocket. The Zn(2+) site is built by Asp-60 and Ser-110. The Phosphoserine intermediate role is filled by Ser-110. A Phosphoserine modification is found at Ser-110. A disulfide bridge links Cys-139 with Cys-201. Residue Asn-140 is glycosylated (N-linked (GlcNAc...) asparagine). Thr-173 contacts Mg(2+). The N-linked (GlcNAc...) asparagine glycan is linked to Asn-230. Ca(2+) is bound at residue Glu-235. Asn-271 carries an N-linked (GlcNAc...) asparagine glycan. Ca(2+) is bound by residues Phe-290 and Glu-291. Asn-303 carries N-linked (GlcNAc...) asparagine glycosylation. Asp-306 is a Ca(2+) binding site. Glu-332 serves as a coordination point for Mg(2+). 4 residues coordinate Zn(2+): Asp-337, His-341, Asp-378, and His-379. Asn-430 carries N-linked (GlcNAc...) asparagine glycosylation. Position 454 (His-454) interacts with Zn(2+). A disulfide bridge links Cys-489 with Cys-497. A lipid anchor (GPI-anchor amidated serine) is attached at Ser-501. Positions 502 to 524 are cleaved as a propeptide — removed in mature form; it reads SASSPSPGALLLPLALFPLRTLF.

This sequence belongs to the alkaline phosphatase family. As to quaternary structure, homodimer. The cofactor is Mg(2+). Zn(2+) serves as cofactor. Requires Ca(2+) as cofactor. Post-translationally, N-glycosylated.

It localises to the cell membrane. Its subcellular location is the extracellular vesicle membrane. The protein localises to the mitochondrion membrane. The protein resides in the mitochondrion intermembrane space. It carries out the reaction a phosphate monoester + H2O = an alcohol + phosphate. The enzyme catalyses diphosphate + H2O = 2 phosphate + H(+). The catalysed reaction is pyridoxal 5'-phosphate + H2O = pyridoxal + phosphate. It catalyses the reaction phosphoethanolamine + H2O = ethanolamine + phosphate. It carries out the reaction N-phosphocreatine + H2O = creatine + phosphate. The enzyme catalyses ATP + H2O = ADP + phosphate + H(+). The catalysed reaction is ADP + H2O = AMP + phosphate + H(+). It catalyses the reaction AMP + H2O = adenosine + phosphate. Phosphatase activity is specifically inhibited by 5-((5-chloro-2-methoxyphenyl)sulfonamido)nicotinamide (SBI-425). In terms of biological role, alkaline phosphatase that metabolizes various phosphate compounds and plays a key role in skeletal mineralization and adaptive thermogenesis. Has broad substrate specificity and can hydrolyze a considerable variety of compounds: however, only a few substrates, such as diphosphate (inorganic pyrophosphate; PPi), pyridoxal 5'-phosphate (PLP) and N-phosphocreatine are natural substrates. Plays an essential role in skeletal and dental mineralization via its ability to hydrolyze extracellular diphosphate, a potent mineralization inhibitor, to phosphate: it thereby promotes hydroxyapatite crystal formation and increases inorganic phosphate concentration. Acts in a non-redundant manner with PHOSPHO1 in skeletal mineralization: while PHOSPHO1 mediates the initiation of hydroxyapatite crystallization in the matrix vesicles (MVs), ALPL/TNAP catalyzes the spread of hydroxyapatite crystallization in the extracellular matrix. Also promotes dephosphorylation of osteopontin (SSP1), an inhibitor of hydroxyapatite crystallization in its phosphorylated state; it is however unclear whether ALPL/TNAP mediates SSP1 dephosphorylation via a direct or indirect manner. Catalyzes dephosphorylation of PLP to pyridoxal (PL), the transportable form of vitamin B6, in order to provide a sufficient amount of PLP in the brain, an essential cofactor for enzymes catalyzing the synthesis of diverse neurotransmitters. Additionally, also able to mediate ATP degradation in a stepwise manner to adenosine, thereby regulating the availability of ligands for purinergic receptors. Also capable of dephosphorylating microbial products, such as lipopolysaccharides (LPS) as well as other phosphorylated small-molecules, such as poly-inosine:cytosine (poly I:C). Acts as a key regulator of adaptive thermogenesis as part of the futile creatine cycle: localizes to the mitochondria of thermogenic fat cells and acts by mediating hydrolysis of N-phosphocreatine to initiate a futile cycle of creatine dephosphorylation and phosphorylation. During the futile creatine cycle, creatine and N-phosphocreatine are in a futile cycle, which dissipates the high energy charge of N-phosphocreatine as heat without performing any mechanical or chemical work. The sequence is that of Alkaline phosphatase, tissue-nonspecific isozyme (Alpl) from Rattus norvegicus (Rat).